Here is a 77-residue protein sequence, read N- to C-terminus: MSEYMKNEILEFLNRHNGGKTAEIAEALAVTDYQARYYLLLLEKEGMVQRSPLRRGMATYWFLKGEMQAGQNCSSTT.

This sequence to E.coli AfaF and DaaF.

Its function is as follows. Plays a role in the inhibition of methylation at the GATC1028 site located in the regulatory region upstream of the pabA promoter. May, in conjunction with the Mbf (methylation blocking factor), inhibits deoxyadenosine methylase from methylating the GATC1028 site. In Escherichia coli, this protein is Major pilus subunit operon regulatory protein (papI).